A 234-amino-acid chain; its full sequence is Phosphoribosylaminoimidazole-succinocarboxamide synthase (234 aa).

It belongs to the SAICAR synthetase family.

The catalysed reaction is 5-amino-1-(5-phospho-D-ribosyl)imidazole-4-carboxylate + L-aspartate + ATP = (2S)-2-[5-amino-1-(5-phospho-beta-D-ribosyl)imidazole-4-carboxamido]succinate + ADP + phosphate + 2 H(+). It participates in purine metabolism; IMP biosynthesis via de novo pathway; 5-amino-1-(5-phospho-D-ribosyl)imidazole-4-carboxamide from 5-amino-1-(5-phospho-D-ribosyl)imidazole-4-carboxylate: step 1/2. In Streptococcus pyogenes serotype M18 (strain MGAS8232), this protein is Phosphoribosylaminoimidazole-succinocarboxamide synthase.